A 383-amino-acid chain; its full sequence is ATP phosphoribosyltransferase regulatory subunit (383 aa).

The protein belongs to the class-II aminoacyl-tRNA synthetase family. HisZ subfamily. In terms of assembly, heteromultimer composed of HisG and HisZ subunits.

It localises to the cytoplasm. It participates in amino-acid biosynthesis; L-histidine biosynthesis; L-histidine from 5-phospho-alpha-D-ribose 1-diphosphate: step 1/9. In terms of biological role, required for the first step of histidine biosynthesis. May allow the feedback regulation of ATP phosphoribosyltransferase activity by histidine. This chain is ATP phosphoribosyltransferase regulatory subunit, found in Cupriavidus pinatubonensis (strain JMP 134 / LMG 1197) (Cupriavidus necator (strain JMP 134)).